The sequence spans 538 residues: uncharacterized protein (538 aa).

A signal peptide spans 1–17; it reads MNLQILLLLLLFCHVAA. N-linked (GlcNAc...) asparagine glycosylation is present at Asn115.

This is an uncharacterized protein from Caenorhabditis elegans.